The sequence spans 387 residues: Protein REVEILLE 1 (387 aa).

2 stretches are compositionally biased toward polar residues: residues 1-17 (MASSPLTANVQGTNASL) and 27-37 (KQIQFNDQSFG). The segment at 1-44 (MASSPLTANVQGTNASLRNRDEETADKQIQFNDQSFGGNDYAPK) is disordered. In terms of domain architecture, HTH myb-type spans 50–104 (TITKERERWTDEEHKKFVEALKLYGRAWRRIEEHVGSKTAVQIRSHAQKFFSKVA). The H-T-H motif DNA-binding region spans 77-100 (WRRIEEHVGSKTAVQIRSHAQKFF). 3 disordered regions span residues 105–200 (REAT…TANA), 306–334 (KAVQNEGSSTGSNTGSVDDTGHTEKTTEP), and 350–387 (AFSELRRTNSESNSRGFGPYKKRKMVTEEEEHEIHLHL). Over residues 124 to 134 (RPKRKPAHPYP) the composition is skewed to basic residues. Residues 141–166 (ADQTSRSVSPSERDTQSPTSVLSTVG) show a composition bias toward polar residues. Composition is skewed to low complexity over residues 172–200 (SLDSSSPNRSLSPVSSASPPAALTTTANA) and 312–323 (GSSTGSNTGSVD). The span at 324-333 (DTGHTEKTTE) shows a compositional bias: basic and acidic residues.

It is found in the nucleus. In terms of biological role, morning-phased transcription factor integrating the circadian clock and auxin pathways. Binds to the evening element (EE) of promoters. Does not act within the central clock, but regulates free auxin levels in a time-of-day specific manner. Positively regulates the expression of YUC8 during the day, but has no effect during the night. Negative regulator of freezing tolerance. The sequence is that of Protein REVEILLE 1 (RVE1) from Arabidopsis thaliana (Mouse-ear cress).